The following is a 409-amino-acid chain: Glutamyl-tRNA reductase (409 aa).

Residues 46–49 (TCNR), S88, 93–95 (ENE), and Q99 contribute to the substrate site. C47 (nucleophile) is an active-site residue. 164–169 (GNGMIA) contacts NADP(+).

This sequence belongs to the glutamyl-tRNA reductase family. Homodimer.

The catalysed reaction is (S)-4-amino-5-oxopentanoate + tRNA(Glu) + NADP(+) = L-glutamyl-tRNA(Glu) + NADPH + H(+). Its pathway is porphyrin-containing compound metabolism; protoporphyrin-IX biosynthesis; 5-aminolevulinate from L-glutamyl-tRNA(Glu): step 1/2. Catalyzes the NADPH-dependent reduction of glutamyl-tRNA(Glu) to glutamate 1-semialdehyde (GSA). The polypeptide is Glutamyl-tRNA reductase (Thermoplasma acidophilum (strain ATCC 25905 / DSM 1728 / JCM 9062 / NBRC 15155 / AMRC-C165)).